Reading from the N-terminus, the 641-residue chain is Calpain-6 (641 aa).

Residues Leu26–Val343 form the Calpain catalytic domain. Residues Asn344–Arg495 are domain III. A C2 domain is found at Thr498–Ala621.

Belongs to the peptidase C2 family. As to quaternary structure, interacts (via domain III) with microtubules. Interacts (via domain II) with ARHGEF2 (via the N-terminal zinc finger). Expressed only in placenta.

It localises to the cytoplasm. Its subcellular location is the perinuclear region. It is found in the cytoskeleton. The protein resides in the spindle. Its function is as follows. Microtubule-stabilizing protein that may be involved in the regulation of microtubule dynamics and cytoskeletal organization. May act as a regulator of RAC1 activity through interaction with ARHGEF2 to control lamellipodial formation and cell mobility. Does not seem to have protease activity as it has lost the active site residues. In Homo sapiens (Human), this protein is Calpain-6 (CAPN6).